Consider the following 64-residue polypeptide: uncharacterized protein (64 aa).

The next 2 helical transmembrane spans lie at 4-24 (IYQY…WLAY) and 35-55 (MYLN…TFGM).

Its subcellular location is the cell membrane. This is an uncharacterized protein from Bacillus subtilis (strain 168).